A 259-amino-acid polypeptide reads, in one-letter code: Dihydroorotate dehydrogenase B (NAD(+)), electron transfer subunit (259 aa).

Residues 2-102 (MQKQNMIVVN…LGPLGHGFPV (101 aa)) form the FAD-binding FR-type domain. FAD contacts are provided by residues 53-56 (RPIS), 70-72 (LYR), and 77-78 (GT). [2Fe-2S] cluster contacts are provided by Cys-221, Cys-226, Cys-229, and Cys-246.

Belongs to the PyrK family. Heterotetramer of 2 PyrK and 2 PyrD type B subunits. [2Fe-2S] cluster serves as cofactor. The cofactor is FAD.

Its pathway is pyrimidine metabolism; UMP biosynthesis via de novo pathway; orotate from (S)-dihydroorotate (NAD(+) route): step 1/1. In terms of biological role, responsible for channeling the electrons from the oxidation of dihydroorotate from the FMN redox center in the PyrD type B subunit to the ultimate electron acceptor NAD(+). The polypeptide is Dihydroorotate dehydrogenase B (NAD(+)), electron transfer subunit (Bacillus cereus (strain ZK / E33L)).